Here is a 231-residue protein sequence, read N- to C-terminus: Small ribosomal subunit protein uS5 (231 aa).

Residues 61–124 (KFRSKKPYRM…NRAKLNIIKV (64 aa)) enclose the S5 DRBM domain.

Belongs to the universal ribosomal protein uS5 family. As to quaternary structure, part of the 30S ribosomal subunit. Contacts protein S4.

Its function is as follows. With S4 and S12 plays an important role in translational accuracy. The sequence is that of Small ribosomal subunit protein uS5 from Nanoarchaeum equitans (strain Kin4-M).